Here is a 347-residue protein sequence, read N- to C-terminus: MKKQALTIIFLLVSLVTGIQAKENDHWYLGTKMGWSDFNILEYRSKDITPFDTKIDTKNPLGAPVFGLFLGYEFNPYFSFEIENDTTGFSPHLIFQKNEQNIQINSLQLATKLSYPITDDFHIYTQLGGMMFWDNLSFKKDLQNIFTEKSRLIPNVSLGAEYIFNKKFITRLDYTWKSNIAKIMNLSMKPVLGDVALSFGWKFGKSNINEIFSSYIPQSSDKQYVALNENINFPFNSTELKPISHDKLQKLQKEIKNIKSKNIFIMLSGHADRIGNKEYNQKLSENRAYSIKNYFTSHGISQDKISIQGMGNEFSLTNQICKDVSDRPLLISCLAPDRRVEIEVLSD.

An N-terminal signal peptide occupies residues 1-21 (MKKQALTIIFLLVSLVTGIQA). 8 beta stranded membrane-spanning segments follow: residues 26 to 36 (HWYLGTKMGWS), 63 to 74 (APVFGLFLGYEF), 78 to 86 (FSFEIENDT), 105 to 116 (NSLQLATKLSYP), 121 to 129 (FHIYTQLGG), 154 to 163 (PNVSLGAEYI), 168 to 175 (FITRLDYT), and 194 to 202 (DVALSFGWK). A hinge-like region spans residues 207-218 (NINEIFSSYIPQ). The OmpA-like domain occupies 220 to 347 (SDKQYVALNE…RRVEIEVLSD (128 aa)). Cysteine 321 and cysteine 333 are disulfide-bonded.

It belongs to the outer membrane OOP (TC 1.B.6) superfamily. OmpA family. In terms of assembly, monomer and homodimer.

Its subcellular location is the cell outer membrane. In terms of biological role, with TolR probably plays a role in maintaining the position of the peptidoglycan cell wall in the periplasm. Acts as a porin with low permeability that allows slow penetration of small solutes; an internal gate slows down solute passage. In Buchnera aphidicola subsp. Schizaphis graminum (strain Sg), this protein is Outer membrane protein A.